Consider the following 587-residue polypeptide: Phosphatidylinositol-3-phosphatase SAC1 (587 aa).

Residues 1–520 lie on the Cytoplasmic side of the membrane; that stretch reads MATAAYEQLK…SPLSVPRDWK (520 aa). Positions 122–451 constitute an SAC domain; that stretch reads LNHVLNVDGF…ANACAKQYAG (330 aa). The segment at 452-587 is essential for phosphatidylinositol-4-phosphate phosphatase activity; the sequence is TGALKTDFTR…PRLVQKEKID (136 aa). The residue at position 456 (Lys-456) is an N6-acetyllysine. A helical membrane pass occupies residues 521-541; it reads FLALPIIMVVAFSMCIICLLM. The Lumenal portion of the chain corresponds to 542 to 548; that stretch reads AGDTWTE. Residues 549–569 form a helical membrane-spanning segment; that stretch reads TLAYVLFWGVASIGTFFIILY. The Cytoplasmic portion of the chain corresponds to 570–587; sequence NGKDFVDAPRLVQKEKID.

In terms of assembly, interacts with TMEM39A. Interacts with SEC23A and SEC24A; this interaction is reduced in the absence of TMEM39A. Interacts with PLEKHA3 and VAPA and/or VAPB to form a ternary complex.

Its subcellular location is the endoplasmic reticulum membrane. It localises to the golgi apparatus membrane. It carries out the reaction a 1,2-diacyl-sn-glycero-3-phospho-(1D-myo-inositol-3-phosphate) + H2O = a 1,2-diacyl-sn-glycero-3-phospho-(1D-myo-inositol) + phosphate. The catalysed reaction is a 1,2-diacyl-sn-glycero-3-phospho-(1D-myo-inositol 4-phosphate) + H2O = a 1,2-diacyl-sn-glycero-3-phospho-(1D-myo-inositol) + phosphate. Functionally, phosphoinositide phosphatase which catalyzes the hydrolysis of phosphatidylinositol 4-phosphate (PtdIns(4)P), phosphatidylinositol 3-phosphate (PtdIns(3)P) and has low activity towards phosphatidylinositol-3,5-bisphosphate (PtdIns(3,5)P2). Shows a very robust PtdIns(4)P phosphatase activity when it binds PtdIns(4)P in a 'cis' configuration in the cellular environment, with much less activity seen when it binds PtdIns(4)P in 'trans' configuration. PtdIns(4)P phosphatase activity (when it binds PtdIns(4)P in 'trans' configuration) is enhanced in the presence of PLEKHA3. This chain is Phosphatidylinositol-3-phosphatase SAC1 (SACM1L), found in Pongo abelii (Sumatran orangutan).